Consider the following 1393-residue polypeptide: Polarized growth protein RAX2 (1393 aa).

A signal peptide spans 1 to 21 (MLVQFQQLLLLLISIIKLCQA). The Extracellular portion of the chain corresponds to 22 to 1329 (DDNDNSFFQP…TNKNLSRGKV (1308 aa)). Residues N62, N85, N105, N125, N133, N139, N164, N186, N195, N212, N256, N260, N266, N269, N362, N398, N405, N479, N536, N542, N565, N599, N646, N649, N653, N674, N689, N696, N702, N714, N747, N764, N768, N792, N829, N863, N899, N935, N946, N958, N985, N1020, N1030, N1041, N1213, N1232, N1262, and N1323 are each glycosylated (N-linked (GlcNAc...) asparagine). Residues 1330 to 1350 (VGISLACALGSTTLLGLLYII) traverse the membrane as a helical segment. The Cytoplasmic segment spans residues 1351–1393 (PYFALFKNRKDGYFQPERIHEDEMMDAVNPEDLLHEIDLQREK).

This sequence belongs to the RAX2 family.

Its subcellular location is the cell membrane. The protein localises to the cell tip. Required for establishing sites of emergence of yeast and hyphal daughters and for maintaining the linearity of hyphal growth, but not involved in responses that require a reorientation of the direction of already established hyphal growth (tropisms). Does not play a role in penetration or injury of human epithelial cells. This chain is Polarized growth protein RAX2, found in Candida albicans (strain SC5314 / ATCC MYA-2876) (Yeast).